The following is a 353-amino-acid chain: Serine/threonine-protein phosphatase 2A activator 1 (353 aa).

A disordered region spans residues 331 to 353 (ANNATTKMPPPLSTSTSRFIHRR). Polar residues predominate over residues 343–353 (STSTSRFIHRR).

Belongs to the PTPA-type PPIase family.

Its subcellular location is the cytoplasm. The protein resides in the nucleus. It carries out the reaction [protein]-peptidylproline (omega=180) = [protein]-peptidylproline (omega=0). PPIases accelerate the folding of proteins. It catalyzes the cis-trans isomerization of proline imidic peptide bonds in oligopeptides. Acts as a regulatory subunit for PP2A-like phosphatases modulating their activity or substrate specificity, probably by inducing a conformational change in the catalytic subunit, a direct target of the PPIase. Can reactivate inactive phosphatase PP2A-phosphatase methylesterase complexes (PP2Ai) in presence of ATP and Mg(2+) by dissociating the inactive form from the complex. This chain is Serine/threonine-protein phosphatase 2A activator 1 (RRD1), found in Kluyveromyces lactis (strain ATCC 8585 / CBS 2359 / DSM 70799 / NBRC 1267 / NRRL Y-1140 / WM37) (Yeast).